The primary structure comprises 202 residues: Prohormone-4 (202 aa).

An N-terminal signal peptide occupies residues 1-28 (MVQRLCTSVAALSLALSACVFFPRAVMA). The region spanning 46 to 86 (ACRPYEPFKCPGDDTCISIQYLCDGAPDCQDGYDEDSRLCT) is the LDL-receptor class A domain. Disulfide bonds link C47–C61, C55–C74, and C68–C85.

The protein localises to the secreted. In Apis mellifera (Honeybee), this protein is Prohormone-4.